A 308-amino-acid polypeptide reads, in one-letter code: Type II restriction enzyme MamI (308 aa).

The catalysed reaction is Endonucleolytic cleavage of DNA to give specific double-stranded fragments with terminal 5'-phosphates.. In terms of biological role, a P subtype restriction enzyme that recognizes the double-stranded sequence 5'-GATNNNNATC-3' and cleaves after N-5. In Microbacterium ammoniaphilum, this protein is Type II restriction enzyme MamI.